A 401-amino-acid chain; its full sequence is 1-deoxy-D-xylulose 5-phosphate reductoisomerase (401 aa).

The NADPH site is built by Thr11, Gly12, Ser13, Ile14, Arg38, Asn39, and Asn125. A 1-deoxy-D-xylulose 5-phosphate-binding site is contributed by Lys126. Position 127 (Glu127) interacts with NADPH. Residue Asp151 participates in Mn(2+) binding. 1-deoxy-D-xylulose 5-phosphate is bound by residues Ser152, Glu153, Ser179, and His202. Residue Glu153 coordinates Mn(2+). An NADPH-binding site is contributed by Gly208. Residues Ser215, Asn220, Lys221, and Glu224 each contribute to the 1-deoxy-D-xylulose 5-phosphate site. Residue Glu224 participates in Mn(2+) binding.

The protein belongs to the DXR family. Requires Mg(2+) as cofactor. Mn(2+) is required as a cofactor.

It carries out the reaction 2-C-methyl-D-erythritol 4-phosphate + NADP(+) = 1-deoxy-D-xylulose 5-phosphate + NADPH + H(+). Its pathway is isoprenoid biosynthesis; isopentenyl diphosphate biosynthesis via DXP pathway; isopentenyl diphosphate from 1-deoxy-D-xylulose 5-phosphate: step 1/6. Functionally, catalyzes the NADPH-dependent rearrangement and reduction of 1-deoxy-D-xylulose-5-phosphate (DXP) to 2-C-methyl-D-erythritol 4-phosphate (MEP). The sequence is that of 1-deoxy-D-xylulose 5-phosphate reductoisomerase from Paraburkholderia phytofirmans (strain DSM 17436 / LMG 22146 / PsJN) (Burkholderia phytofirmans).